Consider the following 342-residue polypeptide: Ferredoxin--NADP reductase (342 aa).

Residues cysteine 17, aspartate 36, glutamine 44, tyrosine 49, valine 89, phenylalanine 124, aspartate 289, and threonine 330 each coordinate FAD.

It belongs to the ferredoxin--NADP reductase type 2 family. As to quaternary structure, homodimer. Requires FAD as cofactor.

The catalysed reaction is 2 reduced [2Fe-2S]-[ferredoxin] + NADP(+) + H(+) = 2 oxidized [2Fe-2S]-[ferredoxin] + NADPH. The sequence is that of Ferredoxin--NADP reductase from Bradyrhizobium sp. (strain BTAi1 / ATCC BAA-1182).